The following is a 435-amino-acid chain: UDP-N-acetylmuramate--L-alanine ligase (435 aa).

108–114 (GSHGKTS) contacts ATP.

This sequence belongs to the MurCDEF family.

Its subcellular location is the cytoplasm. The enzyme catalyses UDP-N-acetyl-alpha-D-muramate + L-alanine + ATP = UDP-N-acetyl-alpha-D-muramoyl-L-alanine + ADP + phosphate + H(+). Its pathway is cell wall biogenesis; peptidoglycan biosynthesis. Cell wall formation. This is UDP-N-acetylmuramate--L-alanine ligase from Exiguobacterium sp. (strain ATCC BAA-1283 / AT1b).